Consider the following 453-residue polypeptide: Folate transporter 1 (453 aa).

Residue Asn-36 is glycosylated (N-linked (GlcNAc...) asparagine). The next 5 membrane-spanning stretches (helical) occupy residues 48–68 (PYWT…TDIL), 73–93 (IVMI…FGKG), 102–122 (VSFG…YSIV), 136–156 (AAAL…ISTH), and 161–181 (LVLN…AIFL). An N-linked (GlcNAc...) asparagine glycan is attached at Asn-260. 5 consecutive transmembrane segments (helical) span residues 276 to 296 (VANG…SLFI), 306 to 326 (HGQM…YLCS), 331 to 351 (VLVA…LITA), 368 to 388 (IFGC…LVVV), and 401 to 421 (FVIY…FFMI).

Belongs to the reduced folate carrier (RFC) transporter (TC 2.A.48) family. In terms of tissue distribution, highly expressed in pharynx and posterior part of the intestine. Expressed at lower levels in the body wall muscles, head muscles, and vulva muscles. Highly expressed in the intestine of the early larva, levels decrease in the later stages of development.

Its subcellular location is the membrane. Functionally, folate transporter. The chain is Folate transporter 1 (folt-1) from Caenorhabditis elegans.